Reading from the N-terminus, the 161-residue chain is RNA pyrophosphohydrolase (161 aa).

The Nudix hydrolase domain occupies 12 to 154 (PYRPGVGMMI…KRKLYQAVVK (143 aa)). The Nudix box signature appears at 46 to 67 (GGIVPGETPSIAAMREMLEEIG).

The protein belongs to the Nudix hydrolase family. RppH subfamily. A divalent metal cation serves as cofactor.

Accelerates the degradation of transcripts by removing pyrophosphate from the 5'-end of triphosphorylated RNA, leading to a more labile monophosphorylated state that can stimulate subsequent ribonuclease cleavage. This chain is RNA pyrophosphohydrolase, found in Rickettsia bellii (strain OSU 85-389).